The primary structure comprises 217 residues: Outer-membrane lipoprotein LolB (217 aa).

The first 20 residues, 1 to 20 (MSKTVRTLALGGLVLAGLSA), serve as a signal peptide directing secretion. Cysteine 21 is lipidated: N-palmitoyl cysteine. Cysteine 21 carries S-diacylglycerol cysteine lipidation. Positions 105–124 (DTTSGAGRLEGLEGGPRSGP) are disordered.

It belongs to the LolB family. As to quaternary structure, monomer.

Its subcellular location is the cell outer membrane. Plays a critical role in the incorporation of lipoproteins in the outer membrane after they are released by the LolA protein. This is Outer-membrane lipoprotein LolB from Xanthomonas axonopodis pv. citri (strain 306).